The sequence spans 244 residues: Transcription factor Sox-12 (244 aa).

A disordered region spans residues 1–22; it reads MVQNKTTGSCPKPTEVAPGGPS. A DNA-binding region (HMG box) is located at residues 31-99; that stretch reads IKRPMNAFMV…KHMADYPNYK (69 aa). Disordered regions lie at residues 101–137 and 152–193; these read RPRRRSRTQESKTRARLPRSTATCQSVPSPCLSQMDT and GDQV…HEGL. Polar residues-rich tracts occupy residues 120 to 137 and 176 to 186; these read STATCQSVPSPCLSQMDT and HTKTVPSSPQS.

In terms of tissue distribution, expressed at a low level in embryos, and in the adult lung, ovary, skeletal muscle, testis, brain and heart.

The protein resides in the nucleus. Functionally, transcription factor that binds to the sequence 5'-AACAAT-3'. Acts as a transcriptional activator. The polypeptide is Transcription factor Sox-12 (sox12) (Xenopus laevis (African clawed frog)).